The sequence spans 106 residues: Cytochrome c3 (106 aa).

His-26, His-29, Cys-34, Cys-37, His-38, His-39, Cys-50, Cys-55, His-56, His-75, Cys-82, Cys-85, His-86, Cys-98, Cys-101, and His-102 together coordinate heme c.

In terms of processing, binds 4 heme c groups per subunit.

Functionally, participates in sulfate respiration coupled with phosphorylation by transferring electrons from the enzyme dehydrogenase to ferredoxin. This Maridesulfovibrio salexigens (Desulfovibrio salexigens) protein is Cytochrome c3.